The following is a 502-amino-acid chain: Glycerol kinase (502 aa).

Thr14 contacts ADP. Thr14, Thr15, and Ser16 together coordinate ATP. Thr14 contributes to the sn-glycerol 3-phosphate binding site. Arg18 serves as a coordination point for ADP. Positions 84, 85, and 136 each coordinate sn-glycerol 3-phosphate. Residues Arg84, Glu85, and Tyr136 each coordinate glycerol. His232 is subject to Phosphohistidine; by HPr. A sn-glycerol 3-phosphate-binding site is contributed by Asp246. Glycerol-binding residues include Asp246 and Gln247. Residues Thr268 and Gly311 each contribute to the ADP site. ATP-binding residues include Thr268, Gly311, Gln315, and Gly412. Gly412 and Asn416 together coordinate ADP.

This sequence belongs to the FGGY kinase family. Homotetramer and homodimer (in equilibrium). Post-translationally, the phosphoenolpyruvate-dependent sugar phosphotransferase system (PTS), including enzyme I, and histidine-containing protein (HPr) are required for the phosphorylation, which leads to the activation of the enzyme.

The catalysed reaction is glycerol + ATP = sn-glycerol 3-phosphate + ADP + H(+). It participates in polyol metabolism; glycerol degradation via glycerol kinase pathway; sn-glycerol 3-phosphate from glycerol: step 1/1. Activated by phosphorylation and inhibited by fructose 1,6-bisphosphate (FBP). Its function is as follows. Key enzyme in the regulation of glycerol uptake and metabolism. Catalyzes the phosphorylation of glycerol to yield sn-glycerol 3-phosphate. This chain is Glycerol kinase, found in Streptococcus sanguinis (strain SK36).